Consider the following 274-residue polypeptide: Nitrogenase iron protein (274 aa).

Residue 8–15 (GKGGIGKS) coordinates ATP. Residue cysteine 94 participates in [4Fe-4S] cluster binding. An ADP-ribosylarginine; by dinitrogenase reductase ADP-ribosyltransferase modification is found at arginine 97. Residue cysteine 131 coordinates [4Fe-4S] cluster.

Belongs to the NifH/BchL/ChlL family. In terms of assembly, homodimer. Requires [4Fe-4S] cluster as cofactor. Post-translationally, the reversible ADP-ribosylation of Arg-97 inactivates the nitrogenase reductase and regulates nitrogenase activity.

It carries out the reaction N2 + 8 reduced [2Fe-2S]-[ferredoxin] + 16 ATP + 16 H2O = H2 + 8 oxidized [2Fe-2S]-[ferredoxin] + 2 NH4(+) + 16 ADP + 16 phosphate + 6 H(+). In terms of biological role, the key enzymatic reactions in nitrogen fixation are catalyzed by the nitrogenase complex, which has 2 components: the iron protein and the molybdenum-iron protein. This is Nitrogenase iron protein from Prosthecochloris aestuarii (strain DSM 271 / SK 413).